A 152-amino-acid polypeptide reads, in one-letter code: Large ribosomal subunit protein uL24 (152 aa).

Positions 128–152 (VVEEKETSKTSEGGGKTIEETEGEK) are disordered.

The protein belongs to the universal ribosomal protein uL24 family. As to quaternary structure, part of the 50S ribosomal subunit.

Functionally, one of two assembly initiator proteins, it binds directly to the 5'-end of the 23S rRNA, where it nucleates assembly of the 50S subunit. Its function is as follows. Located at the polypeptide exit tunnel on the outside of the subunit. In Staphylothermus marinus (strain ATCC 43588 / DSM 3639 / JCM 9404 / F1), this protein is Large ribosomal subunit protein uL24.